Consider the following 114-residue polypeptide: UPF0145 protein YG5714_0873 (114 aa).

It belongs to the UPF0145 family.

The chain is UPF0145 protein YG5714_0873 from Saccharolobus islandicus (strain Y.G.57.14 / Yellowstone #1) (Sulfolobus islandicus).